A 717-amino-acid chain; its full sequence is Segment polarity protein dishevelled homolog DVL-3 (717 aa).

The region spanning Met-1 to Asp-82 is the DIX domain. The interval Gly-89–Ser-235 is disordered. Over residues His-118–Asn-127 the composition is skewed to polar residues. Positions Ala-140–Thr-155 are enriched in basic and acidic residues. The span at Glu-173–Phe-189 shows a compositional bias: low complexity. Residues Arg-199 to Ser-210 show a composition bias toward polar residues. The segment covering Leu-212–Lys-224 has biased composition (basic residues). Residues Thr-248–Ala-333 form the PDZ domain. Positions Ser-421–Asp-495 constitute a DEP domain. The tract at residues Pro-552–Ile-653 is disordered. Low complexity predominate over residues Gly-564–Ser-579. 2 stretches are compositionally biased toward basic and acidic residues: residues Ser-580–Asp-593 and Glu-602–Ser-618. A compositionally biased stretch (basic residues) spans His-629 to His-645.

It belongs to the DSH family. In terms of tissue distribution, expressed throughout the epidermis.

Its subcellular location is the cytoplasm. In terms of biological role, involved in the signal transduction pathway mediated by multiple Wnt genes. Required during ciliogenesis for the docking of basal bodies to the apical plasma membrane. In Xenopus laevis (African clawed frog), this protein is Segment polarity protein dishevelled homolog DVL-3.